A 109-amino-acid polypeptide reads, in one-letter code: MGSPSLTKTINASLSLHSITQPITLLKTMHYVLQLTILPSAMQHYATLRNFTHPACSVNKQAEQGKEQQQYAMKSQFQFRSGICSKVRSDELGFKGNSLQLNDLPKNPY.

The protein resides in the mitochondrion. Its function is as follows. Has a role in meiosis. In Schizosaccharomyces pombe (strain 972 / ATCC 24843) (Fission yeast), this protein is Meiotically up-regulated gene 153 protein (mug153).